Here is a 330-residue protein sequence, read N- to C-terminus: Phenylalanine--tRNA ligase alpha subunit (330 aa).

Glutamate 246 is a Mg(2+) binding site.

It belongs to the class-II aminoacyl-tRNA synthetase family. Phe-tRNA synthetase alpha subunit type 1 subfamily. As to quaternary structure, tetramer of two alpha and two beta subunits. The cofactor is Mg(2+).

Its subcellular location is the cytoplasm. It carries out the reaction tRNA(Phe) + L-phenylalanine + ATP = L-phenylalanyl-tRNA(Phe) + AMP + diphosphate + H(+). This Campylobacter jejuni subsp. jejuni serotype O:6 (strain 81116 / NCTC 11828) protein is Phenylalanine--tRNA ligase alpha subunit.